A 552-amino-acid polypeptide reads, in one-letter code: HTH-type transcriptional regulator SgrR (552 aa).

The segment at 163–493 (ELKPDLAHHW…DDLDTDAQQW (331 aa)) is solute-binding.

Activates the small RNA gene sgrS under glucose-phosphate stress conditions as well as yfdZ. Represses its own transcription under both stress and non-stress conditions. Might act as a sensor of the intracellular accumulation of phosphoglucose by binding these molecules in its C-terminal solute-binding domain. The chain is HTH-type transcriptional regulator SgrR from Pectobacterium atrosepticum (strain SCRI 1043 / ATCC BAA-672) (Erwinia carotovora subsp. atroseptica).